Here is a 1395-residue protein sequence, read N- to C-terminus: DNA-directed RNA polymerase subunit beta' (1395 aa).

Zn(2+)-binding residues include C70, C72, C85, and C88. Residues D461, D463, and D465 each coordinate Mg(2+). Zn(2+)-binding residues include C815, C889, C896, and C899.

This sequence belongs to the RNA polymerase beta' chain family. As to quaternary structure, the RNAP catalytic core consists of 2 alpha, 1 beta, 1 beta' and 1 omega subunit. When a sigma factor is associated with the core the holoenzyme is formed, which can initiate transcription. The cofactor is Mg(2+). Zn(2+) serves as cofactor.

The enzyme catalyses RNA(n) + a ribonucleoside 5'-triphosphate = RNA(n+1) + diphosphate. DNA-dependent RNA polymerase catalyzes the transcription of DNA into RNA using the four ribonucleoside triphosphates as substrates. The protein is DNA-directed RNA polymerase subunit beta' of Ruthia magnifica subsp. Calyptogena magnifica.